Reading from the N-terminus, the 78-residue chain is Small ribosomal subunit protein bS16c (78 aa).

Belongs to the bacterial ribosomal protein bS16 family.

The protein localises to the plastid. Its subcellular location is the chloroplast. In Amborella trichopoda, this protein is Small ribosomal subunit protein bS16c.